Consider the following 675-residue polypeptide: PTS system glucose-specific EIICBA component (675 aa).

Residues 3-414 enclose the PTS EIIC type-1 domain; it reads KKLFGQMQRI…FNYKTPGRED (412 aa). The next 11 helical transmembrane spans lie at 16–36, 59–79, 81–101, 126–146, 170–190, 211–231, 273–293, 303–323, 328–348, 355–375, and 378–398; these read LMLP…GTAF, MLTG…ALGV, IGLA…FIIL, VLGI…GALA, FVPI…AIIW, LAVF…LHHI, FMQG…LAIY, VVAG…ITEP, FLFV…LSFL, VHLG…GILP, and TAWW…YFVF. The region spanning 425 to 506 is the PTS EIIB type-1 domain; it reads SQLPFDVLKA…AKIISGEITK (82 aa). Catalysis depends on C447, which acts as the Phosphocysteine intermediate; for EIIB activity. The 105-residue stretch at 547-651 folds into the PTS EIIA type-1 domain; sequence DKVFSEKMMG…SIITPVIITN (105 aa). H599 serves as the catalytic Tele-phosphohistidine intermediate; for EIIA activity.

It localises to the cell membrane. The catalysed reaction is N(pros)-phospho-L-histidyl-[protein] + D-glucose(out) = D-glucose 6-phosphate(in) + L-histidyl-[protein]. Functionally, the phosphoenolpyruvate-dependent sugar phosphotransferase system (sugar PTS), a major carbohydrate active transport system, catalyzes the phosphorylation of incoming sugar substrates concomitantly with their translocation across the cell membrane. This system is involved in glucose transport. In Staphylococcus epidermidis, this protein is PTS system glucose-specific EIICBA component (ptsG).